Here is a 207-residue protein sequence, read N- to C-terminus: LexA repressor (207 aa).

Residues 28-48 constitute a DNA-binding region (H-T-H motif); the sequence is RAEIARRLGFKSPNAAEEHLK. Active-site for autocatalytic cleavage activity residues include Ser126 and Lys163.

The protein belongs to the peptidase S24 family. In terms of assembly, homodimer.

It carries out the reaction Hydrolysis of Ala-|-Gly bond in repressor LexA.. Represses a number of genes involved in the response to DNA damage (SOS response), including recA and lexA. In the presence of single-stranded DNA, RecA interacts with LexA causing an autocatalytic cleavage which disrupts the DNA-binding part of LexA, leading to derepression of the SOS regulon and eventually DNA repair. The sequence is that of LexA repressor from Marinomonas sp. (strain MWYL1).